The chain runs to 181 residues: Oligoribonuclease (181 aa).

The Exonuclease domain occupies 8–171; the sequence is LIWLDMEMTG…ADILESIEEM (164 aa). Tyr-129 is a catalytic residue.

Belongs to the oligoribonuclease family.

The protein localises to the cytoplasm. Its function is as follows. 3'-to-5' exoribonuclease specific for small oligoribonucleotides. This chain is Oligoribonuclease, found in Chromobacterium violaceum (strain ATCC 12472 / DSM 30191 / JCM 1249 / CCUG 213 / NBRC 12614 / NCIMB 9131 / NCTC 9757 / MK).